Here is a 446-residue protein sequence, read N- to C-terminus: Eukaryotic translation initiation factor 3 subunit E (446 aa).

The PCI domain occupies 256-425 (TDLFFSPAYI…GTVIMNHPPQ (170 aa)).

This sequence belongs to the eIF-3 subunit E family. In terms of assembly, component of the eukaryotic translation initiation factor 3 (eIF-3) complex.

The protein localises to the cytoplasm. Functionally, component of the eukaryotic translation initiation factor 3 (eIF-3) complex, which is involved in protein synthesis of a specialized repertoire of mRNAs and, together with other initiation factors, stimulates binding of mRNA and methionyl-tRNAi to the 40S ribosome. The eIF-3 complex specifically targets and initiates translation of a subset of mRNAs involved in cell proliferation. The polypeptide is Eukaryotic translation initiation factor 3 subunit E (int6) (Aspergillus terreus (strain NIH 2624 / FGSC A1156)).